Here is a 174-residue protein sequence, read N- to C-terminus: Ribosome maturation factor RimM (174 aa).

In terms of domain architecture, PRC barrel spans 101 to 174 (AGEFYLADLC…IELLQRWILE (74 aa)).

Belongs to the RimM family. In terms of assembly, binds ribosomal protein uS19.

Its subcellular location is the cytoplasm. In terms of biological role, an accessory protein needed during the final step in the assembly of 30S ribosomal subunit, possibly for assembly of the head region. Essential for efficient processing of 16S rRNA. May be needed both before and after RbfA during the maturation of 16S rRNA. It has affinity for free ribosomal 30S subunits but not for 70S ribosomes. The polypeptide is Ribosome maturation factor RimM (Treponema pallidum (strain Nichols)).